Here is a 64-residue protein sequence, read N- to C-terminus: Small ribosomal subunit protein eS17 (64 aa).

It belongs to the eukaryotic ribosomal protein eS17 family.

The polypeptide is Small ribosomal subunit protein eS17 (Methanosarcina mazei (strain ATCC BAA-159 / DSM 3647 / Goe1 / Go1 / JCM 11833 / OCM 88) (Methanosarcina frisia)).